A 418-amino-acid chain; its full sequence is MAGSLPPCVVDCGTGYTKLGYAGNTEPQFIIPSCIAIRESAKVVDQAQRRVLRGVDDLDFFIGDEAIDKPTYATKWPIRHGIVEDWDLMERFMEQVVFKYLRAEPEDHYFLMTEPPLNTPENREYLAEIMFESFNVPGLYIAVQAVLALAASWTSRQVGERTLTGIVIDSGDGVTHVIPVAEGYVIGSCIKHIPIAGRDITYFIQQLLREREVGIPPEQSLETAKAIKEKYCYICPDIVREFAKYDVDPRKWIKQYTGINAINQKKFIIDVGYERFLGPEIFFHPEFANPDFMESISDVVDEVIQSCPIDVRRPLYKNVVLSGGSTMFRDFGRRLQRDLKRVVDARLKLSQELSGGRIKPKPVEVQVVTHHMQRYAVWFGGSMLASTPEFFQVCHTKKDYEEYGPSICRHNPVFGVMS.

This sequence belongs to the actin family. ARP3 subfamily. Interacts with the Arp2/3 complex composed of ARP2, ARP3, ARPC1B, ARPC1B/p41-ARC, ARPC2/p34-ARC, ARPC3/p21-ARC, ARPC4/p20-ARC and ARPC5/p16-ARC.

It localises to the cytoplasm. Its subcellular location is the cytoskeleton. The protein resides in the cell projection. Its function is as follows. Plays a role in the organization of the actin cytoskeleton. May function as ATP-binding component of the Arp2/3 complex which is involved in regulation of actin polymerization and together with an activating nucleation-promoting factor (NPF) mediates the formation of branched actin networks. May decrease the metastatic potential of tumors. The sequence is that of Actin-related protein 3B (Actr3b) from Mus musculus (Mouse).